The sequence spans 35 residues: Photosystem II reaction center protein T (35 aa).

The chain crosses the membrane as a helical span at residues 3-23 (ALVYTFLLVSTLGIIFFAIFF).

It belongs to the PsbT family. As to quaternary structure, PSII is composed of 1 copy each of membrane proteins PsbA, PsbB, PsbC, PsbD, PsbE, PsbF, PsbH, PsbI, PsbJ, PsbK, PsbL, PsbM, PsbT, PsbY, PsbZ, Psb30/Ycf12, at least 3 peripheral proteins of the oxygen-evolving complex and a large number of cofactors. It forms dimeric complexes.

The protein resides in the plastid. The protein localises to the chloroplast thylakoid membrane. In terms of biological role, found at the monomer-monomer interface of the photosystem II (PS II) dimer, plays a role in assembly and dimerization of PSII. PSII is a light-driven water plastoquinone oxidoreductase, using light energy to abstract electrons from H(2)O, generating a proton gradient subsequently used for ATP formation. This chain is Photosystem II reaction center protein T, found in Stangeria eriopus (Natal grass cycad).